A 155-amino-acid polypeptide reads, in one-letter code: SsrA-binding protein (155 aa).

It belongs to the SmpB family.

The protein localises to the cytoplasm. Its function is as follows. Required for rescue of stalled ribosomes mediated by trans-translation. Binds to transfer-messenger RNA (tmRNA), required for stable association of tmRNA with ribosomes. tmRNA and SmpB together mimic tRNA shape, replacing the anticodon stem-loop with SmpB. tmRNA is encoded by the ssrA gene; the 2 termini fold to resemble tRNA(Ala) and it encodes a 'tag peptide', a short internal open reading frame. During trans-translation Ala-aminoacylated tmRNA acts like a tRNA, entering the A-site of stalled ribosomes, displacing the stalled mRNA. The ribosome then switches to translate the ORF on the tmRNA; the nascent peptide is terminated with the 'tag peptide' encoded by the tmRNA and targeted for degradation. The ribosome is freed to recommence translation, which seems to be the essential function of trans-translation. The protein is SsrA-binding protein of Geobacillus thermodenitrificans (strain NG80-2).